The following is a 298-amino-acid chain: Tyrosine recombinase XerC (298 aa).

One can recognise a Core-binding (CB) domain in the interval M1–M84. Residues Y105 to L286 enclose the Tyr recombinase domain. Active-site residues include R145, K169, H238, R241, and H264. Y273 serves as the catalytic O-(3'-phospho-DNA)-tyrosine intermediate.

Belongs to the 'phage' integrase family. XerC subfamily. In terms of assembly, forms a cyclic heterotetrameric complex composed of two molecules of XerC and two molecules of XerD.

The protein localises to the cytoplasm. In terms of biological role, site-specific tyrosine recombinase, which acts by catalyzing the cutting and rejoining of the recombining DNA molecules. The XerC-XerD complex is essential to convert dimers of the bacterial chromosome into monomers to permit their segregation at cell division. It also contributes to the segregational stability of plasmids. This chain is Tyrosine recombinase XerC, found in Staphylococcus aureus (strain Mu3 / ATCC 700698).